Here is a 154-residue protein sequence, read N- to C-terminus: uncharacterized protein (154 aa).

Residues 104-124 (NNNNNDNDNNNKEKEDNDEKE) form a disordered region. Positions 112–124 (NNNKEKEDNDEKE) are enriched in basic and acidic residues.

This is an uncharacterized protein from Dictyostelium discoideum (Social amoeba).